We begin with the raw amino-acid sequence, 153 residues long: 3-hydroxyacyl-[acyl-carrier-protein] dehydratase FabZ (153 aa).

H57 is a catalytic residue.

Belongs to the thioester dehydratase family. FabZ subfamily.

Its subcellular location is the cytoplasm. The catalysed reaction is a (3R)-hydroxyacyl-[ACP] = a (2E)-enoyl-[ACP] + H2O. Functionally, involved in unsaturated fatty acids biosynthesis. Catalyzes the dehydration of short chain beta-hydroxyacyl-ACPs and long chain saturated and unsaturated beta-hydroxyacyl-ACPs. This is 3-hydroxyacyl-[acyl-carrier-protein] dehydratase FabZ from Aeromonas salmonicida (strain A449).